The chain runs to 346 residues: N-acetyl-gamma-glutamyl-phosphate reductase (346 aa).

Cys149 is a catalytic residue.

It belongs to the NAGSA dehydrogenase family. Type 1 subfamily.

The protein localises to the cytoplasm. The catalysed reaction is N-acetyl-L-glutamate 5-semialdehyde + phosphate + NADP(+) = N-acetyl-L-glutamyl 5-phosphate + NADPH + H(+). Its pathway is amino-acid biosynthesis; L-arginine biosynthesis; N(2)-acetyl-L-ornithine from L-glutamate: step 3/4. Functionally, catalyzes the NADPH-dependent reduction of N-acetyl-5-glutamyl phosphate to yield N-acetyl-L-glutamate 5-semialdehyde. The polypeptide is N-acetyl-gamma-glutamyl-phosphate reductase (Micrococcus luteus (strain ATCC 4698 / DSM 20030 / JCM 1464 / CCM 169 / CCUG 5858 / IAM 1056 / NBRC 3333 / NCIMB 9278 / NCTC 2665 / VKM Ac-2230) (Micrococcus lysodeikticus)).